Here is a 395-residue protein sequence, read N- to C-terminus: Probable alcohol dehydrogenase EutG (395 aa).

NAD(+)-binding positions include aspartate 57, 116-120 (GSVLD), 156-160 (TTAGT), lysine 178, and 197-201 (VTEGV). Fe cation contacts are provided by aspartate 212, histidine 216, histidine 281, and histidine 295. Positions 295 and 354 each coordinate NAD(+).

Belongs to the iron-containing alcohol dehydrogenase family. It depends on Fe cation as a cofactor.

Its subcellular location is the bacterial microcompartment. It carries out the reaction ethanol + NAD(+) = acetaldehyde + NADH + H(+). It participates in amine and polyamine degradation; ethanolamine degradation. Its function is as follows. Probably acts on the acetaldehyde produced by the degradation of ethanolamine, producing ethanol. Expression of the eut operon allows this bacteria to use ethanolamine (EA) as a carbon, nitrogen and energy source. It relies on cobalamin (vitamin B12) both as a cofactor for the ethanolamine ammonia-lyase (EAL) activity and to induce the operon. EA enhances bacterial survival in macrophages in a concentration-dependent manner, suggesting it is an important nutrient during infection. This is Probable alcohol dehydrogenase EutG from Salmonella typhimurium (strain LT2 / SGSC1412 / ATCC 700720).